Consider the following 321-residue polypeptide: Cytochrome c biogenesis protein CcsA (321 aa).

Transmembrane regions (helical) follow at residues 9 to 29 (ILTHISFSTISIVITIHLITL), 44 to 64 (GMIATFFSITGFLVSRWVSSG), 68 to 88 (LSNLYESLIFLSWTLYILHTI), 143 to 163 (MLLSYATLLCGSLLSAALLII), 225 to 245 (VISLGFTLLTVGILCGAVWAN), 259 to 273 (TWAFITWTIFAIYLH), and 288 to 308 (VASIGFLIIWICYFGINLLGI).

This sequence belongs to the CcmF/CycK/Ccl1/NrfE/CcsA family. As to quaternary structure, may interact with Ccs1.

Its subcellular location is the plastid. It localises to the chloroplast thylakoid membrane. Required during biogenesis of c-type cytochromes (cytochrome c6 and cytochrome f) at the step of heme attachment. The protein is Cytochrome c biogenesis protein CcsA of Zea mays (Maize).